A 933-amino-acid chain; its full sequence is MQRYDIIRMIGKGGMGEVYLAYDPVCSRKVALKRIREDLSDNELLKKRFLREAKIAADLVHPGVVPVFTICSDSDPVYYTMPYIEGYTLKSLLKSVWQCDSLPKDLAEQTSVGTFLSIFHKICSTVEYVHSRGILHRDLKPDNILLGLFSEVVILDWGAALSKEMQEEVLLDIDIPVTGSMFSNMTIPGKIVGTPDYMAPERLRGTPASESTDIYALGVILYQMLTLSFPYRNKKGKKISFRHQISSPEEIAPHREIPPFLSQVAMKALAADPKVRYASVKELKDDIEQHLQGSPEWTPKTILHTQKAECWKLRESILLSKYFPMLGVSPALWYSLAISKIESFSEVRLEYTLLRKGLEDGFGILLPPSEGVDHGDFYHGYGFWLHIKNSVFSVSLVKNGLEIRKTSRPIKENKEKFFIALEKQNHRLSLIIDHVVWMIHMDYLPGRGGRIGVIIQDVTDVCGNIVVLESSGSLQVSCLAVPDAFLNEKLYDRAITFYRRIAESFPGRKEGYEAQFRIGIALLEKASESGDSEGFTQALGKFEILHNSVAAPLEYLGKALVYQRLGEYNEEVKSLLLALKRYCQCPEISRIRDHIVYRLHETLYSNHRLSLVFMLLALHIAPESINATEEEYFVKNLHGKIQDTLFCNLDLSPIDFRSSKMELLLSYWSGFTPFLPGLFQKYWDLKDYRALADVFYVAADLGNREFLEMYSDLVRENICSTTCTEDIVEFLPHQLEHFFSGVRAISLHEPLEKVFAHIEILDPVLILYLFDLFAKDALIHHRGELILSAITLIEKYVSSQQYYEHLLPCEVLAYLWMKDEKKVYNLLCNNYEESLWLDDRSPAFVLYGCWLALVEDSSLSYLHLSGCREDALYPRALIGGFCSPLGICENQLSYQERRKLLLQKFIFFHCLGMNEERDNCTVAYDLLSIERSL.

A Protein kinase domain is found at 4-291 (YDIIRMIGKG…ELKDDIEQHL (288 aa)). Residues 10-18 (IGKGGMGEV) and K33 each bind ATP. The active-site Proton acceptor is D138.

It belongs to the protein kinase superfamily. Ser/Thr protein kinase family. Autophosphorylated on serine and threonine residues.

It carries out the reaction L-seryl-[protein] + ATP = O-phospho-L-seryl-[protein] + ADP + H(+). The catalysed reaction is L-threonyl-[protein] + ATP = O-phospho-L-threonyl-[protein] + ADP + H(+). In terms of biological role, together with the serine/threonine kinase Pkn1, may play a role in the specific interactions with host proteins during intracellular growth. This is Serine/threonine-protein kinase PknD from Chlamydia felis (strain Fe/C-56) (Chlamydophila felis).